Reading from the N-terminus, the 78-residue chain is Large ribosomal subunit protein bL31 (78 aa).

The Zn(2+) site is built by Cys-16, Cys-18, Cys-38, and Cys-41.

This sequence belongs to the bacterial ribosomal protein bL31 family. Type A subfamily. As to quaternary structure, part of the 50S ribosomal subunit. Zn(2+) is required as a cofactor.

Functionally, binds the 23S rRNA. This Frankia alni (strain DSM 45986 / CECT 9034 / ACN14a) protein is Large ribosomal subunit protein bL31.